A 203-amino-acid chain; its full sequence is GTP cyclohydrolase-2 (203 aa).

49-53 is a GTP binding site; sequence RIHSE. Zn(2+)-binding residues include Cys54, Cys65, and Cys67. GTP is bound by residues Gln70, 92–94, and Thr114; that span reads EGR. Residue Asp126 is the Proton acceptor of the active site. Arg128 acts as the Nucleophile in catalysis. The GTP site is built by Thr149 and Lys154.

It belongs to the GTP cyclohydrolase II family. Zn(2+) serves as cofactor.

The enzyme catalyses GTP + 4 H2O = 2,5-diamino-6-hydroxy-4-(5-phosphoribosylamino)-pyrimidine + formate + 2 phosphate + 3 H(+). It functions in the pathway cofactor biosynthesis; riboflavin biosynthesis; 5-amino-6-(D-ribitylamino)uracil from GTP: step 1/4. Its function is as follows. Catalyzes the conversion of GTP to 2,5-diamino-6-ribosylamino-4(3H)-pyrimidinone 5'-phosphate (DARP), formate and pyrophosphate. The sequence is that of GTP cyclohydrolase-2 from Shewanella sp. (strain MR-4).